Consider the following 483-residue polypeptide: Putative (R)-citramalate synthase CimA (483 aa).

Residues 1–245 (MRDGEQTPGV…DTGIKHEQIY (245 aa)) form the Pyruvate carboxyltransferase domain.

Belongs to the alpha-IPM synthase/homocitrate synthase family. As to quaternary structure, homodimer.

The catalysed reaction is pyruvate + acetyl-CoA + H2O = (3R)-citramalate + CoA + H(+). The protein operates within amino-acid biosynthesis; L-isoleucine biosynthesis; 2-oxobutanoate from pyruvate: step 1/3. Functionally, catalyzes the condensation of pyruvate and acetyl-coenzyme A to form (R)-citramalate. The sequence is that of Putative (R)-citramalate synthase CimA from Methanosarcina acetivorans (strain ATCC 35395 / DSM 2834 / JCM 12185 / C2A).